The following is a 235-amino-acid chain: Orotidine 5'-phosphate decarboxylase (235 aa).

Substrate is bound by residues Asp-10, Lys-33, 60–69, Thr-123, Arg-185, Gln-194, Gly-214, and Arg-215; that span reads DLKMSDIPNT. Residue Lys-62 is the Proton donor of the active site.

Belongs to the OMP decarboxylase family. Type 1 subfamily. In terms of assembly, homodimer.

It catalyses the reaction orotidine 5'-phosphate + H(+) = UMP + CO2. It functions in the pathway pyrimidine metabolism; UMP biosynthesis via de novo pathway; UMP from orotate: step 2/2. Catalyzes the decarboxylation of orotidine 5'-monophosphate (OMP) to uridine 5'-monophosphate (UMP). This is Orotidine 5'-phosphate decarboxylase from Lactobacillus gasseri (strain ATCC 33323 / DSM 20243 / BCRC 14619 / CIP 102991 / JCM 1131 / KCTC 3163 / NCIMB 11718 / NCTC 13722 / AM63).